The primary structure comprises 232 residues: Thiamine import ATP-binding protein ThiQ (232 aa).

The region spanning 2 to 230 (LKLTDITWLY…KASASALLGI (229 aa)) is the ABC transporter domain. 32–39 (GPSGAGKS) contributes to the ATP binding site.

It belongs to the ABC transporter superfamily. Thiamine importer (TC 3.A.1.19.1) family. The complex is composed of two ATP-binding proteins (ThiQ), two transmembrane proteins (ThiP) and a solute-binding protein (ThiB).

It is found in the cell inner membrane. The enzyme catalyses thiamine(out) + ATP + H2O = thiamine(in) + ADP + phosphate + H(+). Part of the ABC transporter complex ThiBPQ involved in thiamine import. Responsible for energy coupling to the transport system. This is Thiamine import ATP-binding protein ThiQ from Escherichia coli O157:H7.